Reading from the N-terminus, the 515-residue chain is Meiotically up-regulated gene 68 protein (515 aa).

The segment at leucine 165–tyrosine 204 is disordered.

Functionally, has a role in meiosis. This chain is Meiotically up-regulated gene 68 protein (mug68), found in Schizosaccharomyces pombe (strain 972 / ATCC 24843) (Fission yeast).